A 342-amino-acid polypeptide reads, in one-letter code: Phosphate acyltransferase (342 aa).

The protein belongs to the PlsX family. Homodimer. Probably interacts with PlsY.

It localises to the cytoplasm. The enzyme catalyses a fatty acyl-[ACP] + phosphate = an acyl phosphate + holo-[ACP]. Its pathway is lipid metabolism; phospholipid metabolism. Catalyzes the reversible formation of acyl-phosphate (acyl-PO(4)) from acyl-[acyl-carrier-protein] (acyl-ACP). This enzyme utilizes acyl-ACP as fatty acyl donor, but not acyl-CoA. In Shewanella sp. (strain ANA-3), this protein is Phosphate acyltransferase.